A 466-amino-acid chain; its full sequence is 3-isopropylmalate dehydratase large subunit (466 aa).

Residues Cys347, Cys407, and Cys410 each coordinate [4Fe-4S] cluster.

It belongs to the aconitase/IPM isomerase family. LeuC type 1 subfamily. As to quaternary structure, heterodimer of LeuC and LeuD. It depends on [4Fe-4S] cluster as a cofactor.

The enzyme catalyses (2R,3S)-3-isopropylmalate = (2S)-2-isopropylmalate. The protein operates within amino-acid biosynthesis; L-leucine biosynthesis; L-leucine from 3-methyl-2-oxobutanoate: step 2/4. In terms of biological role, catalyzes the isomerization between 2-isopropylmalate and 3-isopropylmalate, via the formation of 2-isopropylmaleate. The sequence is that of 3-isopropylmalate dehydratase large subunit from Escherichia fergusonii (strain ATCC 35469 / DSM 13698 / CCUG 18766 / IAM 14443 / JCM 21226 / LMG 7866 / NBRC 102419 / NCTC 12128 / CDC 0568-73).